The following is a 408-amino-acid chain: Probable cysteine desulfurase (408 aa).

Residue Lys-225 is modified to N6-(pyridoxal phosphate)lysine.

Belongs to the class-V pyridoxal-phosphate-dependent aminotransferase family. Csd subfamily. It depends on pyridoxal 5'-phosphate as a cofactor.

It carries out the reaction (sulfur carrier)-H + L-cysteine = (sulfur carrier)-SH + L-alanine. In terms of biological role, catalyzes the removal of elemental sulfur and selenium atoms from L-cysteine, L-cystine, L-selenocysteine, and L-selenocystine to produce L-alanine. This is Probable cysteine desulfurase (csd) from Mycoplasma genitalium (strain ATCC 33530 / DSM 19775 / NCTC 10195 / G37) (Mycoplasmoides genitalium).